The chain runs to 4960 residues: Malformin synthetase mlfA (4960 aa).

An adenylation 1 region spans residues 194–564 (ERHATNRPHS…CGRADTQVKL (371 aa)). Residues 705 to 778 (SRLEQEVQLA…EAASLAEVQE (74 aa)) form the Carrier 1 domain. Residue Ser739 is modified to O-(pantetheine 4'-phosphoryl)serine. Positions 816-1247 (EDVFPCTTMQ…ALNTLSLLQA (432 aa)) are condensation 1. Residues 1275-1650 (DRWVTRQPEG…GRKDTQVKLR (376 aa)) form an adenylation 2 region. The 78-residue stretch at 1777 to 1854 (TPASELERTL…HLAAEVGEPA (78 aa)) folds into the Carrier 2 domain. Disordered stretches follow at residues 1855–1883 (GQSA…NDGV) and 1917–1943 (GGSS…KKNA). Low complexity-rich tracts occupy residues 1857–1881 (SASS…STND) and 1919–1936 (SSSN…SSSS). The interval 1989–2404 (EDIYPATALQ…AVSCSDKETL (416 aa)) is condensation 2. The tract at residues 2427–2819 (RRTPHAPAVC…IGRRDGQLKL (393 aa)) is adenylation 3. Residues 2955–3031 (RPVTSQEREM…QLICHINTIR (77 aa)) enclose the Carrier 3 domain. Ser2992 carries the O-(pantetheine 4'-phosphoryl)serine modification. Condensation regions lie at residues 3049-3464 (VALA…FTFP) and 3520-3889 (SGYV…EQLV). The segment at 3914–4304 (HNSRQAVCAW…VGRKDNQIKF (391 aa)) is adenylation 4. The region spanning 4438–4514 (MPSTAAERKM…DLSDQAKSLI (77 aa)) is the Carrier 4 domain. The residue at position 4475 (Ser4475) is an O-(pantetheine 4'-phosphoryl)serine. The interval 4551–4878 (DVLPTTSFQH…LQTIVQHQNN (328 aa)) is condensation 5.

The protein belongs to the NRP synthetase family.

It functions in the pathway secondary metabolite biosynthesis. Functionally, nonribosomal peptide synthetase; part of the gene cluster that mediates the biosynthesis of malformins, cyclic pentapeptides with a disulfide bond between 2 consecutive cysteins, that show potential anti-tumor as well as antimalarial and antitrypanosomal properties. The nonribosomal peptide synthetase mlfA is responsible of the formation of the cyclic pentapeptide. The malformin biosynthesis clusters in malformin-producing fungi also contain enzymes involved in the formation of the disulfide bond between the two consecutive cysteins within malformins, in addition to additional tailoring enzymes such as methyltransferases or oxidoreductases. They are also composed of up to 4 major facilitator superfamily transporters, and transcription factors probably involved in the regulation of the expression of those clusters. The chain is Malformin synthetase mlfA from Aspergillus neoniger (strain CBS 115656).